An 845-amino-acid polypeptide reads, in one-letter code: Disintegrin and metalloproteinase domain-containing protein 9 (845 aa).

The signal sequence occupies residues 1 to 29; the sequence is MGPRALSPLASLRLRWLLACGLLGPVLEA. The Extracellular portion of the chain corresponds to 30-697; it reads GRPDLEQTVH…YNAKSTALRD (668 aa). Asparagine 144, asparagine 154, and asparagine 231 each carry an N-linked (GlcNAc...) asparagine glycan. In terms of domain architecture, Peptidase M12B spans 212 to 406; it reads RYVELFIVVD…KGGSCLLNIP (195 aa). Cystine bridges form between cysteine 322/cysteine 401, cysteine 363/cysteine 385, cysteine 365/cysteine 370, and cysteine 473/cysteine 493. Histidine 347 contacts Zn(2+). Glutamate 348 is a catalytic residue. Positions 351 and 357 each coordinate Zn(2+). Residues asparagine 381, asparagine 487, and asparagine 636 are each glycosylated (N-linked (GlcNAc...) asparagine). The Disintegrin domain occupies 414–501; sequence APSCGNKLVD…FCPPDVFIQN (88 aa). Intrachain disulfides connect cysteine 644–cysteine 656, cysteine 650–cysteine 662, and cysteine 664–cysteine 673. One can recognise an EGF-like domain in the interval 644–698; the sequence is CDIQGKCHGHGVCNSNKNCHCEDGWAPPHCDTKGYGGSVDSGPTYNAKSTALRDG. A helical membrane pass occupies residues 698–718; that stretch reads GLLVFFFLIVPLVAAAIFLFI. Residues 719–845 are Cytoplasmic-facing; it reads KRDELRKTFR…PAPPLYSSLT (127 aa). The segment at 729–845 is disordered; sequence KKRSQMSDGR…PAPPLYSSLT (117 aa). Positions 734-745 are enriched in polar residues; sequence MSDGRNQANVSR. The span at 783 to 794 shows a compositional bias: pro residues; sequence PGGPGVSRPPPG.

In terms of assembly, interacts with SH3GL2 and SNX9 through its cytoplasmic tail. Interacts with ITGA6. Zn(2+) serves as cofactor. Post-translationally, proteolytically cleaved in the trans-Golgi network before it reaches the plasma membrane to generate a mature protein. The removal of the pro-domain occurs via cleavage at two different sites. Processed most likely by a pro-protein convertase such as furin, at the boundary between the pro-domain and the catalytic domain. An additional upstream cleavage pro-protein convertase site (Arg-56/Glu-57) has an important role in the activation of ADAM9. In terms of processing, phosphorylation is induced in vitro by phorbol-12-myristate-13-acetate (PMA).

The protein resides in the cell membrane. Synthesized as an inactive form which is proteolytically cleaved to generate an active enzyme. Processing at the upstream site is particularly important for activation of the proenzyme, whereas processing at the boundary between the pro-domain and the catalytic domain does not appear to be essential. Inhibited by hydroxamic acid-based inhibitors. Its function is as follows. Metalloprotease that cleaves and releases a number of molecules with important roles in tumorigenesis and angiogenesis, such as TEK, KDR, EPHB4, CD40, VCAM1 and CDH5. May mediate cell-cell, cell-matrix interactions and regulate the motility of cells via interactions with integrins. The polypeptide is Disintegrin and metalloproteinase domain-containing protein 9 (Mus musculus (Mouse)).